The following is a 319-amino-acid chain: L-tryptophan isonitrile synthase AmbI1 (319 aa).

It belongs to the isocyanide synthase family.

It carries out the reaction D-ribulose 5-phosphate + L-tryptophan = (2S)-3-(1H-indol-3-yl)-2-isocyanopropanoate + hydroxyacetone + formaldehyde + phosphate + H2O + H(+). Its function is as follows. Involved in the biosynthesis of ambiguines, a family of hapalindole-type alkaloids. Responsible for the synthesis of the isonitrile group on tryptophan using ribulose 5-phosphate as the source of the carbon atom. The chain is L-tryptophan isonitrile synthase AmbI1 from Fischerella ambigua (strain UTEX 1903).